A 766-amino-acid polypeptide reads, in one-letter code: Probable serine/threonine-protein kinase KKQ8 (766 aa).

Disordered stretches follow at residues 1 to 165 (MPEH…DTSS), 201 to 240 (GHYAPGFIQPPKSPTSSRVPSRSNSRKGREHAGTVSAAQL), 277 to 297 (SDANGNSHNHASKNDGHLDLP), 362 to 384 (TRSHVQSGSDDSSDDDEELDDPS), and 417 to 437 (AAKNKHNQSSKHRTPSGAGVQ). Low complexity predominate over residues 14–25 (RSLSLGSSMRSL). The span at 49–64 (VDIRVDTASASREHTP) shows a compositional bias: basic and acidic residues. A compositionally biased stretch (polar residues) spans 94–120 (LTPTNSNPQSKSGSPVSQNTSQESLIT). Residues 127 to 137 (EDYRPSKDSRR) show a composition bias toward basic and acidic residues. 2 stretches are compositionally biased toward polar residues: residues 140-165 (RNASPMSSNGNLPINANTVIGPDTSS) and 214-223 (PTSSRVPSRS). Positions 288 to 297 (SKNDGHLDLP) are enriched in basic and acidic residues. The segment covering 372–382 (DSSDDDEELDD) has biased composition (acidic residues). The span at 419 to 430 (KNKHNQSSKHRT) shows a compositional bias: basic residues. Residues 449–752 (GKCVAVVGHG…IDKLLQTGWM (304 aa)) enclose the Protein kinase domain. Residues 455 to 463 (VGHGAYGVV) and Lys-493 contribute to the ATP site. The active-site Proton acceptor is Asp-603.

It belongs to the protein kinase superfamily. CAMK Ser/Thr protein kinase family. NPR/HAL subfamily. HAL5 sub-subfamily.

The protein resides in the cytoplasm. It carries out the reaction L-seryl-[protein] + ATP = O-phospho-L-seryl-[protein] + ADP + H(+). The enzyme catalyses L-threonyl-[protein] + ATP = O-phospho-L-threonyl-[protein] + ADP + H(+). The protein is Probable serine/threonine-protein kinase KKQ8 (KKQ8) of Candida glabrata (strain ATCC 2001 / BCRC 20586 / JCM 3761 / NBRC 0622 / NRRL Y-65 / CBS 138) (Yeast).